A 156-amino-acid polypeptide reads, in one-letter code: Transcription elongation factor GreA (156 aa).

The stretch at 45–66 (NAEYHSAKEKQSFIEGRIKELE) forms a coiled coil.

It belongs to the GreA/GreB family.

In terms of biological role, necessary for efficient RNA polymerase transcription elongation past template-encoded arresting sites. The arresting sites in DNA have the property of trapping a certain fraction of elongating RNA polymerases that pass through, resulting in locked ternary complexes. Cleavage of the nascent transcript by cleavage factors such as GreA or GreB allows the resumption of elongation from the new 3'terminus. GreA releases sequences of 2 to 3 nucleotides. The protein is Transcription elongation factor GreA of Jannaschia sp. (strain CCS1).